Here is a 189-residue protein sequence, read N- to C-terminus: Protein Rex (189 aa).

Positions 1–16 are enriched in basic residues; that stretch reads MPKTRRRPRRSQRKRP. A disordered region spans residues 1–27; that stretch reads MPKTRRRPRRSQRKRPPTPWPTSQGLD. The short motif at 2-18 is the Nuclear localization signal, and RNA-binding (RxRE) element; that stretch reads PKTRRRPRRSQRKRPPT. The segment at 56-70 is homomultimerization; it reads RPAYIVTPYWPPVQS. S70 carries the post-translational modification Phosphoserine; by host. A Nuclear export signal motif is present at residues 82 to 93; sequence LSAQLYSSLSLD. Residues 87–189 form a disordered region; the sequence is YSSLSLDSPP…PPSPGPSCPM (103 aa). Residues 105–114 show a composition bias toward low complexity; the sequence is PLRSLPRQSL. The segment at 123–131 is homomultimerization; the sequence is PSSRPCANT. Residues 143 to 164 are compositionally biased toward polar residues; sequence LGSTSQPCLFQTPDSGPKTCTP. T174 bears the Phosphothreonine; by host mark. S177 bears the Phosphoserine; by host mark. Residues 178–189 are compositionally biased toward pro residues; sequence FPPPSPGPSCPM.

The protein belongs to the deltaretrovirus Rex protein family. Homomultimer. Multimeric assembly is essential for activity and involves XPO1. Binds to human XPO1 and KPNB1. Interacts (via N-terminal nuclear localization signal) with human NPM1. Post-translationally, phosphorylated.

It localises to the host nucleus. It is found in the host nucleolus. The protein localises to the host cytoplasm. Its function is as follows. Rex escorts unspliced gag-pro-pol and singly spliced env mRNAs out of the nucleus of infected cells. These mRNAs carry a recognition sequence called Rex responsive element (RxRE or XRE) located at the 3' region of the long terminal repeat (LTR). This function is essential since most HTLV proteins are translated from unspliced or partially spliced pre-mRNAs that cannot exit the nucleus by the pathway used by fully processed cellular mRNAs. Rex itself is translated from a fully spliced mRNA that probably readily exits the nucleus. Rex's nuclear localization signal (NLS) binds directly to KPNB1/importin beta-1 without previous binding to KPNA1/importin alpha-1. KPNB1 binds to the GDP bound form of RAN (Ran-GDP) and targets Rex to the nucleus. In the nucleus, the conversion from Ran-GDP to Ran-GTP dissociates Rex from KPNB1 and allows Rex's binding to the RRE in viral pre-mRNAs. Rex multimerizes on the RRE via cooperative assembly. This multimerization is critical for its full biological activity, since it may shield the viral RNA from being spliced or down-regulated, and probably exposes Rex's nuclear export signal (NES) to the surface. Rex can then form a complex with XPO1/CRM1, RANBP3 and Ran-GTP, leading to nuclear export of the complex. Conversion from Ran-GTP to Ran-GDP mediates dissociation of the Rex/RRE/XPO1/RANBP3/RAN complex, so that Rex can return to the nucleus for a subsequent round of export. This Human T-cell leukemia virus 1 (isolate Caribbea HS-35 subtype A) (HTLV-1) protein is Protein Rex.